The following is a 337-amino-acid chain: Lipoyl synthase (337 aa).

Positions 81, 86, 92, 107, 111, 114, and 323 each coordinate [4Fe-4S] cluster. The Radical SAM core domain maps to 93–312; it reads FSHGTATFMI…EDYGNALGFS (220 aa).

It belongs to the radical SAM superfamily. Lipoyl synthase family. It depends on [4Fe-4S] cluster as a cofactor.

It localises to the cytoplasm. It carries out the reaction [[Fe-S] cluster scaffold protein carrying a second [4Fe-4S](2+) cluster] + N(6)-octanoyl-L-lysyl-[protein] + 2 oxidized [2Fe-2S]-[ferredoxin] + 2 S-adenosyl-L-methionine + 4 H(+) = [[Fe-S] cluster scaffold protein] + N(6)-[(R)-dihydrolipoyl]-L-lysyl-[protein] + 4 Fe(3+) + 2 hydrogen sulfide + 2 5'-deoxyadenosine + 2 L-methionine + 2 reduced [2Fe-2S]-[ferredoxin]. The protein operates within protein modification; protein lipoylation via endogenous pathway; protein N(6)-(lipoyl)lysine from octanoyl-[acyl-carrier-protein]: step 2/2. Catalyzes the radical-mediated insertion of two sulfur atoms into the C-6 and C-8 positions of the octanoyl moiety bound to the lipoyl domains of lipoate-dependent enzymes, thereby converting the octanoylated domains into lipoylated derivatives. This Xanthomonas campestris pv. campestris (strain B100) protein is Lipoyl synthase.